The following is a 410-amino-acid chain: Calsequestrin-2 (410 aa).

The N-terminal stretch at 1–19 (MKRTHLFIAGLYLLASCRA) is a signal peptide. A calcium regulated hydrophobic site region spans residues 221–242 (MDEPIAIPDKPYTEEELVEFVK). Residue Y282 is modified to Phosphotyrosine. N-linked (GlcNAc...) asparagine glycans are attached at residues N335 and N395. Residues 364–410 (DVLSGKINTEDDDNEEGDDGDDDEDDDDDDGNNSDEESNDDSDDDDE) form a disordered region. Residues 373-410 (EDDDNEEGDDGDDDEDDDDDDGNNSDEESNDDSDDDDE) show a composition bias toward acidic residues. S397, S401, and S405 each carry phosphoserine; by CK2.

This sequence belongs to the calsequestrin family. As to quaternary structure, interacts with ASPH. Monomer, homodimer and homooligomer. Mostly monomeric in the absence of calcium. Forms higher oligomers in a calcium-dependent manner. Dimers associate to form tetramers, that then form linear homomer chains. Interacts with TRDN. In terms of processing, phosphorylation in the C-terminus, probably by CK2, moderately increases calcium buffering capacity. Post-translationally, N-glycosylated. Detected in heart muscle (at protein level).

It localises to the sarcoplasmic reticulum lumen. In terms of biological role, calsequestrin is a high-capacity, moderate affinity, calcium-binding protein and thus acts as an internal calcium store in muscle. Calcium ions are bound by clusters of acidic residues at the protein surface, especially at the interface between subunits. Can bind around 60 Ca(2+) ions. Regulates the release of lumenal Ca(2+) via the calcium release channel RYR2; this plays an important role in triggering muscle contraction. Plays a role in excitation-contraction coupling in the heart and in regulating the rate of heart beats. The chain is Calsequestrin-2 (CASQ2) from Canis lupus familiaris (Dog).